The following is a 176-amino-acid chain: Isopentenyl-diphosphate Delta-isomerase (176 aa).

Mn(2+) contacts are provided by His-22 and His-28. The 135-residue stretch at 26-160 (LRHKAVSVFV…PERYTPWLRI (135 aa)) folds into the Nudix hydrolase domain. Cys-62 is a catalytic residue. His-64 is a Mn(2+) binding site. Position 82 (Glu-82) interacts with Mg(2+). Residues Glu-108 and Glu-110 each coordinate Mn(2+). Glu-110 is an active-site residue.

The protein belongs to the IPP isomerase type 1 family. The cofactor is Mg(2+). Requires Mn(2+) as cofactor.

It is found in the cytoplasm. It catalyses the reaction isopentenyl diphosphate = dimethylallyl diphosphate. Its pathway is isoprenoid biosynthesis; dimethylallyl diphosphate biosynthesis; dimethylallyl diphosphate from isopentenyl diphosphate: step 1/1. The protein operates within porphyrin-containing compound metabolism; chlorophyll biosynthesis. In terms of biological role, catalyzes the 1,3-allylic rearrangement of the homoallylic substrate isopentenyl (IPP) to its highly electrophilic allylic isomer, dimethylallyl diphosphate (DMAPP). This is Isopentenyl-diphosphate Delta-isomerase from Dinoroseobacter shibae (strain DSM 16493 / NCIMB 14021 / DFL 12).